Here is a 519-residue protein sequence, read N- to C-terminus: Exodeoxyribonuclease 7 large subunit (519 aa).

It belongs to the XseA family. As to quaternary structure, heterooligomer composed of large and small subunits.

Its subcellular location is the cytoplasm. It catalyses the reaction Exonucleolytic cleavage in either 5'- to 3'- or 3'- to 5'-direction to yield nucleoside 5'-phosphates.. Functionally, bidirectionally degrades single-stranded DNA into large acid-insoluble oligonucleotides, which are then degraded further into small acid-soluble oligonucleotides. The polypeptide is Exodeoxyribonuclease 7 large subunit (Cereibacter sphaeroides (strain ATCC 17025 / ATH 2.4.3) (Rhodobacter sphaeroides)).